We begin with the raw amino-acid sequence, 689 residues long: MADNLVIVESPAKAKTIEKYLGKKYKVIASMGHVRDLPRSQMGVDTEDNYEPKYITIRGKGPVVKELKKHAKKAKNVFLASDPDREGEAIAWHLSKILELEDSKENRVVFNEITKDAVKESFKNPREIEMNLVDAQQARRILDRLVGYNISPVLWKKVKKGLSAGRVQSVALRLVIDRENEIRNFKPEEYWTIEGEFRYKKSKFNAKFLHYKNKPFKLKTKKDVEKITAALDGDQFEITNVTKKEKTRNPANPFTTSTLQQEAARKLNFKARKTMMVAQQLYEGIDLKKQGTIGLITYMRTDSTRISDTAKVEAKQYITDKYGESYTSKRKASGKQGDQDAHEAIRPSSTMRTPDDMKSFLTKDQYRLYKLIWERFVASQMAPAILDTVSLDITQGDIKFRANGQTIKFKGFMTLYVETKDDSDSEKENKLPKLEQGDKVTATQIEPAQHYTQPPPRYTEARLVKTLEELKIGRPSTYAPTIDTIQKRNYVKLESKRFVPTELGEIVHEQVKEYFPEIIDVEFTVNMETLLDKIAEGDITWRKVIDGFFSSFKQDVERAEEEMEKIEIKDEPAGEDCEICGSPMVIKMGRYGKFMACSNFPDCRNTKAIVKSIGVKCPKCNDGDVVERKSKKNRVFYGCSKYPECDFISWDKPIGRDCPKCNQYLVENKKGKTTQVICSNCDYKEAAQK.

One can recognise a Toprim domain in the interval 3–113 (DNLVIVESPA…KENRVVFNEI (111 aa)). Mg(2+)-binding residues include Glu-9 and Asp-82. The 429-residue stretch at 129-557 (EMNLVDAQQA…FFSSFKQDVE (429 aa)) folds into the Topo IA-type catalytic domain. Residues 163–168 (SAGRVQ) are interaction with DNA. The active-site O-(5'-phospho-DNA)-tyrosine intermediate is Tyr-298. A disordered region spans residues 328–356 (SKRKASGKQGDQDAHEAIRPSSTMRTPDD). 3 C4-type zinc fingers span residues 577–603 (CEIC…FPDC), 617–645 (CPKC…YPEC), and 658–681 (CPKC…CSNC).

This sequence belongs to the type IA topoisomerase family. As to quaternary structure, monomer. Mg(2+) serves as cofactor.

It catalyses the reaction ATP-independent breakage of single-stranded DNA, followed by passage and rejoining.. Releases the supercoiling and torsional tension of DNA, which is introduced during the DNA replication and transcription, by transiently cleaving and rejoining one strand of the DNA duplex. Introduces a single-strand break via transesterification at a target site in duplex DNA. The scissile phosphodiester is attacked by the catalytic tyrosine of the enzyme, resulting in the formation of a DNA-(5'-phosphotyrosyl)-enzyme intermediate and the expulsion of a 3'-OH DNA strand. The free DNA strand then undergoes passage around the unbroken strand, thus removing DNA supercoils. Finally, in the religation step, the DNA 3'-OH attacks the covalent intermediate to expel the active-site tyrosine and restore the DNA phosphodiester backbone. This is DNA topoisomerase 1 from Staphylococcus aureus (strain USA300).